Reading from the N-terminus, the 397-residue chain is MIRYFTAGESHGPALSAIVEGMPAGITITPKEINTQLARRQQGHGRGGRMKIESDKAEILSGVRFGKTIGSPITLVINNRDWQNWTTTMAQFEKPDEQCSKITIPRPGHADLAGRIKYGFDDIRPVIERSSARETAARVAAGTVARLFLKALGIEIGSYISAIGSAAEASPDKQLEGLLLEGAEAVARQADLSPVRMLGKETETNALAAIDGASERGDTLGGIIEIFITGVPPGFGSYVQHDRRLDAALAAAIISIQAIKGVEIGTAFENARKPGSEVHDEFHLSREKGVIRKTNRAGGLEGSMSSGQTIHLRAAMKPISSLVTPLLSFDVETLQATPSRFERSDTCAVPAAGVVAEAVLAPVIANALLEKLGGDHLDEIRQRLDLYRESIRSTFHS.

Positions 40 and 46 each coordinate NADP(+). Residues 129–131, 257–258, Gly-302, 317–321, and Arg-343 contribute to the FMN site; these read RSS, QA, and KPISS.

The protein belongs to the chorismate synthase family. As to quaternary structure, homotetramer. The cofactor is FMNH2.

The catalysed reaction is 5-O-(1-carboxyvinyl)-3-phosphoshikimate = chorismate + phosphate. Its pathway is metabolic intermediate biosynthesis; chorismate biosynthesis; chorismate from D-erythrose 4-phosphate and phosphoenolpyruvate: step 7/7. Catalyzes the anti-1,4-elimination of the C-3 phosphate and the C-6 proR hydrogen from 5-enolpyruvylshikimate-3-phosphate (EPSP) to yield chorismate, which is the branch point compound that serves as the starting substrate for the three terminal pathways of aromatic amino acid biosynthesis. This reaction introduces a second double bond into the aromatic ring system. The polypeptide is Chorismate synthase (Pelodictyon phaeoclathratiforme (strain DSM 5477 / BU-1)).